The chain runs to 431 residues: Enolase (431 aa).

Residues His-157 and Glu-166 each coordinate substrate. Glu-209 acts as the Proton donor in catalysis. The Mg(2+) site is built by Asp-244, Glu-293, and Asp-318. Glu-293 and Asp-318 together coordinate substrate. Lys-343 functions as the Proton acceptor in the catalytic mechanism. Residues 370-373 (SHRS) and Lys-394 contribute to the substrate site.

The protein belongs to the enolase family. Homodimer. It depends on Mg(2+) as a cofactor.

The protein localises to the cytoplasm. It catalyses the reaction (2R)-2-phosphoglycerate = phosphoenolpyruvate + H2O. The protein operates within carbohydrate degradation; glycolysis; pyruvate from D-glyceraldehyde 3-phosphate: step 4/5. The sequence is that of Enolase (ENO) from Fasciola hepatica (Liver fluke).